Reading from the N-terminus, the 314-residue chain is Taste receptor type 2 member 42 (314 aa).

Over 1–7 the chain is Extracellular; it reads MATELDK. The chain crosses the membrane as a helical span at residues 8–28; the sequence is IFLILEIAEFIIGMLGNVFIG. Topologically, residues 29–50 are cytoplasmic; that stretch reads LVNCSEGIKNQKVFSADFILTC. A helical transmembrane segment spans residues 51-71; that stretch reads LAISTIGQLFVILFDSFLVGL. Residues 72–101 lie on the Extracellular side of the membrane; that stretch reads ASHLYTTYRLGKPVIMLWHMTNHLTTWLAT. A helical transmembrane segment spans residues 102 to 122; sequence CLSIFYFFKIAHFPHSLFLWL. The Cytoplasmic segment spans residues 123–127; the sequence is RWRMN. A helical membrane pass occupies residues 128–148; the sequence is GMIVMLLILSLFLLIFDSLVL. At 149 to 187 the chain is on the extracellular side; that stretch reads EIFIDISLNIIDKSNLTLYLDESKTLYDKLSILKTLLSL. N-linked (GlcNAc...) asparagine glycosylation occurs at Asn163. Residues 188–208 traverse the membrane as a helical segment; the sequence is TSFIPFSLSLTSLLFFFLSLV. The Cytoplasmic portion of the chain corresponds to 209-238; that stretch reads RHTRNLKLSSLGSRDSSTEAHRRAMKMVMS. Residues 239-259 form a helical membrane-spanning segment; that stretch reads FLFLFIVHFFSLQVANWIFFM. Topologically, residues 260 to 265 are extracellular; it reads LWNNKY. The helical transmembrane segment at 266–286 threads the bilayer; the sequence is IKFAMLALNAFPSCHSFILIL. Over 287–314 the chain is Cytoplasmic; that stretch reads GNSKLRQTAVRLLWHLRNYTKTPNALPL.

It belongs to the G-protein coupled receptor T2R family.

It localises to the membrane. Functionally, receptor that may play a role in the perception of bitterness and is gustducin-linked. May play a role in sensing the chemical composition of the gastrointestinal content. The activity of this receptor may stimulate alpha gustducin, mediate PLC-beta-2 activation and lead to the gating of TRPM5. In Pan paniscus (Pygmy chimpanzee), this protein is Taste receptor type 2 member 42 (TAS2R42).